We begin with the raw amino-acid sequence, 208 residues long: Protein-L-isoaspartate O-methyltransferase (208 aa).

Residue serine 59 is part of the active site.

Belongs to the methyltransferase superfamily. L-isoaspartyl/D-aspartyl protein methyltransferase family.

Its subcellular location is the cytoplasm. It carries out the reaction [protein]-L-isoaspartate + S-adenosyl-L-methionine = [protein]-L-isoaspartate alpha-methyl ester + S-adenosyl-L-homocysteine. Catalyzes the methyl esterification of L-isoaspartyl residues in peptides and proteins that result from spontaneous decomposition of normal L-aspartyl and L-asparaginyl residues. It plays a role in the repair and/or degradation of damaged proteins. The sequence is that of Protein-L-isoaspartate O-methyltransferase from Photorhabdus laumondii subsp. laumondii (strain DSM 15139 / CIP 105565 / TT01) (Photorhabdus luminescens subsp. laumondii).